The sequence spans 856 residues: V-type proton ATPase subunit a (856 aa).

The Cytoplasmic segment spans residues 1 to 409; it reads MAPKQDTPFR…NAYGTATYQE (409 aa). The chain crosses the membrane as a helical span at residues 410–428; it reads VNPAIPVIVTFPFLFAVMF. Residues 429 to 430 lie on the Vacuolar side of the membrane; that stretch reads GD. A helical membrane pass occupies residues 431–447; it reads FGHALIMLCAALAMIYW. The Cytoplasmic portion of the chain corresponds to 448 to 460; sequence EKPLKKVTFELFA. A helical transmembrane segment spans residues 461–490; it reads MVFYGRYIVLVMAVFSVYTGLIYNDVFSKS. Residues 491–544 lie on the Vacuolar side of the membrane; sequence MTLFDSQWKWVVPENFKEGMTVKAVLREPNGYRYPFGLDWRWHGTENELLFINS. The chain crosses the membrane as a helical span at residues 545-564; the sequence is YKMKMAIILGWAHMTYSLCF. At 565-582 the chain is on the cytoplasmic side; it reads SYINARHFKRPIDIWGNF. A helical membrane pass occupies residues 583–603; that stretch reads VPGMIFFQSIFGYLVLCIIYK. The Vacuolar segment spans residues 604–648; that stretch reads WSVDWFGTGRQPPGLLNMLIYMFLQPGTLDGGVELYPGQATVQVI. A helical membrane pass occupies residues 649 to 668; that stretch reads LLLLAVIQVPILLFLKPFYL. Residues 669-738 are Cytoplasmic-facing; that stretch reads RWENNRARAK…EVMIHQVIHT (70 aa). Residues 689 to 710 are disordered; the sequence is VSALDEDDEEDPSNGDDYEGAA. The segment covering 692–707 has biased composition (acidic residues); sequence LDEDDEEDPSNGDDYE. The chain crosses the membrane as a helical span at residues 739–763; that stretch reads IEFCLNSVSHTASYLRLWALSLAHQ. The Vacuolar segment spans residues 764–784; sequence QLSAVLWSMTMAKALESKGLG. The helical transmembrane segment at 785–823 threads the bilayer; the sequence is GAIFLVVAFAMFFVLSVIILIIMEGVSAMLHSLRLAWVE. The Cytoplasmic segment spans residues 824-856; that stretch reads SFSKFAEFGGWPFTPFSFKQQLEESEELKEYIG.

This sequence belongs to the V-ATPase 116 kDa subunit family. As to quaternary structure, V-ATPase is a heteromultimeric enzyme composed of a peripheral catalytic V1 complex (components A to H) attached to an integral membrane V0 proton pore complex (components: a, c, c', c'', d, e, f and VOA1).

It is found in the vacuole membrane. Functionally, subunit of the V0 complex of vacuolar(H+)-ATPase (V-ATPase), a multisubunit enzyme composed of a peripheral complex (V1) that hydrolyzes ATP and a membrane integral complex (V0) that translocates protons. V-ATPase is responsible for acidifying and maintaining the pH of intracellular compartments. The sequence is that of V-type proton ATPase subunit a (vph-1) from Neurospora crassa (strain ATCC 24698 / 74-OR23-1A / CBS 708.71 / DSM 1257 / FGSC 987).